A 232-amino-acid chain; its full sequence is Ubiquinone biosynthesis O-methyltransferase (232 aa).

Residues Arg-36, Gly-55, Asp-76, and Met-120 each coordinate S-adenosyl-L-methionine.

It belongs to the methyltransferase superfamily. UbiG/COQ3 family.

The enzyme catalyses a 3-demethylubiquinol + S-adenosyl-L-methionine = a ubiquinol + S-adenosyl-L-homocysteine + H(+). It catalyses the reaction a 3-(all-trans-polyprenyl)benzene-1,2-diol + S-adenosyl-L-methionine = a 2-methoxy-6-(all-trans-polyprenyl)phenol + S-adenosyl-L-homocysteine + H(+). The protein operates within cofactor biosynthesis; ubiquinone biosynthesis. O-methyltransferase that catalyzes the 2 O-methylation steps in the ubiquinone biosynthetic pathway. This is Ubiquinone biosynthesis O-methyltransferase from Burkholderia orbicola (strain MC0-3).